Here is a 249-residue protein sequence, read N- to C-terminus: DNA polymerase sliding clamp (249 aa).

This sequence belongs to the PCNA family. As to quaternary structure, homotrimer which circularizes head-to-tail (head is a N-terminus, tail is at C-terminus) to form a toroid. RFC opens the toroid so it can load on DNA. Interacts with both Pol I (pol) and Pol II (polB-polC), with Hel308 (hjm) and with Hjc. Interaction with the C-terminal PIP-box of RfcL may stabilize the toroidal structure.

Its function is as follows. Sliding clamp subunit that acts as a moving platform for DNA processing. Responsible for tethering the catalytic subunit of DNA polymerase to DNA during high-speed replication. Unlike its eukaryotic paralog, loads on circular DNA without the replication factor C (RFC) clamp loader, although RFC greatly increases loading efficiency. Stimulates the ATPase activity of replication factor C (RFC) in the presence of ssDNA. Stimulates the helicase activity of Hel308 and may alter its substrate specificity. In Pyrococcus furiosus (strain ATCC 43587 / DSM 3638 / JCM 8422 / Vc1), this protein is DNA polymerase sliding clamp.